The sequence spans 173 residues: Crossover junction endodeoxyribonuclease RuvC (173 aa).

Catalysis depends on residues Asp8, Glu67, and Asp139. Residues Asp8, Glu67, and Asp139 each coordinate Mg(2+).

It belongs to the RuvC family. As to quaternary structure, homodimer which binds Holliday junction (HJ) DNA. The HJ becomes 2-fold symmetrical on binding to RuvC with unstacked arms; it has a different conformation from HJ DNA in complex with RuvA. In the full resolvosome a probable DNA-RuvA(4)-RuvB(12)-RuvC(2) complex forms which resolves the HJ. Requires Mg(2+) as cofactor.

Its subcellular location is the cytoplasm. It carries out the reaction Endonucleolytic cleavage at a junction such as a reciprocal single-stranded crossover between two homologous DNA duplexes (Holliday junction).. The RuvA-RuvB-RuvC complex processes Holliday junction (HJ) DNA during genetic recombination and DNA repair. Endonuclease that resolves HJ intermediates. Cleaves cruciform DNA by making single-stranded nicks across the HJ at symmetrical positions within the homologous arms, yielding a 5'-phosphate and a 3'-hydroxyl group; requires a central core of homology in the junction. The consensus cleavage sequence is 5'-(A/T)TT(C/G)-3'. Cleavage occurs on the 3'-side of the TT dinucleotide at the point of strand exchange. HJ branch migration catalyzed by RuvA-RuvB allows RuvC to scan DNA until it finds its consensus sequence, where it cleaves and resolves the cruciform DNA. The polypeptide is Crossover junction endodeoxyribonuclease RuvC (Salmonella arizonae (strain ATCC BAA-731 / CDC346-86 / RSK2980)).